Reading from the N-terminus, the 296-residue chain is Protein FAM221A (296 aa).

The interval 235-263 (MQPPSTSSPQPLAVGPSTQISSLRKPEED) is disordered. A compositionally biased stretch (polar residues) spans 237–256 (PPSTSSPQPLAVGPSTQISS).

This sequence belongs to the FAM221 family.

This chain is Protein FAM221A (Fam221a), found in Rattus norvegicus (Rat).